The sequence spans 47 residues: Large ribosomal subunit protein bL36B (47 aa).

This sequence belongs to the bacterial ribosomal protein bL36 family.

This Pectobacterium atrosepticum (strain SCRI 1043 / ATCC BAA-672) (Erwinia carotovora subsp. atroseptica) protein is Large ribosomal subunit protein bL36B.